The primary structure comprises 263 residues: 4-hydroxy-2-oxo-heptane-1,7-dioate aldolase (263 aa).

His45 functions as the Proton acceptor in the catalytic mechanism. Residue Gln147 coordinates substrate. An a divalent metal cation-binding site is contributed by Glu149. Ala174 and Asp175 together coordinate substrate. A divalent metal cation is bound at residue Asp175.

The protein belongs to the HpcH/HpaI aldolase family. As to quaternary structure, homohexamer; trimer of dimers. The cofactor is a divalent metal cation.

It catalyses the reaction 4-hydroxy-2-oxoheptanedioate = succinate semialdehyde + pyruvate. It participates in aromatic compound metabolism; 4-hydroxyphenylacetate degradation; pyruvate and succinate semialdehyde from 4-hydroxyphenylacetate: step 7/7. Its function is as follows. Catalyzes the reversible retro-aldol cleavage of 4-hydroxy-2-ketoheptane-1,7-dioate (HKHD) to pyruvate and succinic semialdehyde. The protein is 4-hydroxy-2-oxo-heptane-1,7-dioate aldolase of Salmonella enteritidis PT4 (strain P125109).